A 43-amino-acid polypeptide reads, in one-letter code: uncharacterized protein (43 aa).

Residues 1-43 (MFKSRIETGGFQFQVHGDDESAMDDEFIDDDDDQQVVEPVTDN) are disordered. The segment covering 20-35 (ESAMDDEFIDDDDDQQ) has biased composition (acidic residues).

This is an uncharacterized protein from Dictyostelium discoideum (Social amoeba).